We begin with the raw amino-acid sequence, 146 residues long: Hemoglobin subunit beta (146 aa).

Residues 2–146 (EWTDFERATI…VVNSLGRQYH (145 aa)) enclose the Globin domain. H63 and H92 together coordinate heme b.

It belongs to the globin family. As to quaternary structure, heterotetramer of two alpha chains and two beta chains. Can form polymers. As to expression, red blood cells.

In terms of biological role, involved in oxygen transport from gills to the various peripheral tissues. The protein is Hemoglobin subunit beta (hbb) of Chelidonichthys kumu (Bluefin gurnard).